The following is a 232-amino-acid chain: 5'-methylthioadenosine/S-adenosylhomocysteine nucleosidase (232 aa).

E12 (proton acceptor) is an active-site residue. Residues G78, I152, and 173–174 (ME) contribute to the substrate site. D197 (proton donor) is an active-site residue.

The protein belongs to the PNP/UDP phosphorylase family. MtnN subfamily. As to quaternary structure, homodimer.

The enzyme catalyses S-adenosyl-L-homocysteine + H2O = S-(5-deoxy-D-ribos-5-yl)-L-homocysteine + adenine. It catalyses the reaction S-methyl-5'-thioadenosine + H2O = 5-(methylsulfanyl)-D-ribose + adenine. It carries out the reaction 5'-deoxyadenosine + H2O = 5-deoxy-D-ribose + adenine. The protein operates within amino-acid biosynthesis; L-methionine biosynthesis via salvage pathway; S-methyl-5-thio-alpha-D-ribose 1-phosphate from S-methyl-5'-thioadenosine (hydrolase route): step 1/2. Its function is as follows. Catalyzes the irreversible cleavage of the glycosidic bond in both 5'-methylthioadenosine (MTA) and S-adenosylhomocysteine (SAH/AdoHcy) to adenine and the corresponding thioribose, 5'-methylthioribose and S-ribosylhomocysteine, respectively. Also cleaves 5'-deoxyadenosine, a toxic by-product of radical S-adenosylmethionine (SAM) enzymes, into 5-deoxyribose and adenine. Thus, is required for in vivo function of the radical SAM enzymes biotin synthase and lipoic acid synthase, that are inhibited by 5'-deoxyadenosine accumulation. This Citrobacter koseri (strain ATCC BAA-895 / CDC 4225-83 / SGSC4696) protein is 5'-methylthioadenosine/S-adenosylhomocysteine nucleosidase.